Consider the following 94-residue polypeptide: Defensin-like protein 21 (94 aa).

A signal peptide spans 1-26 (MVRTNVVSFVLFAAIVLCIGSIQIDG). 4 cysteine pairs are disulfide-bonded: C41-C92, C51-C79, C65-C88, and C69-C90.

The protein belongs to the DEFL family.

Its subcellular location is the secreted. The chain is Defensin-like protein 21 from Arabidopsis thaliana (Mouse-ear cress).